We begin with the raw amino-acid sequence, 301 residues long: Single-stranded DNA-binding protein (301 aa).

The interval 3–7 (KRKST) is LAST. Zn(2+) contacts are provided by His64, Cys77, Cys87, and Cys90. The disordered stretch occupies residues 272-301 (TKTEDDFMSSSSGSSSSADDTDLDDLLNDL). The segment covering 279-289 (MSSSSGSSSSA) has biased composition (low complexity). Positions 290 to 301 (DDTDLDDLLNDL) are enriched in acidic residues.

Belongs to the Tequatrovirus single-stranded DNA-binding protein family. As to quaternary structure, homodimer in the absence of DNA, monomer when binding DNA. Interacts with the DNA helicase assembly protein; a ternary complex between the helicase assembly protein, the single-stranded DNA-binding protein and ssDNA is an obligatory intermediate in the helicase loading mechanism. Part of the replicase complex that includes the DNA polymerase, the polymerase clamp, the clamp loader complex, the single-stranded DNA binding protein, the primase, the DnaB-like SF4 replicative helicase and the helicase assembly factor. Interacts (via C-terminus) with the viral SF1 dDA helicase. Interacts with the viral SF2 UvsW repair helicase.

In terms of biological role, single-stranded DNA-binding protein that participates in viral DNA replication, recombination, and repair. Coats the lagging-strand ssDNA as the replication fork advances. Stimulates the activities of viral DNA polymerase and DnaB-like SF4 replicative helicase, probably via its interaction with the helicase assembly factor. Stimulates the unwinding activity of UvsW helicase, inhibits it DNA winding activity. Together with DnaB-like SF4 replicative helicase and the helicase assembly factor, promotes pairing of two homologous DNA molecules containing complementary single-stranded regions and mediates homologous DNA strand exchange. Also promotes the formation of joint molecules. mRNA specific autogenous translational repressor. This is Single-stranded DNA-binding protein from Escherichia coli (Bacteriophage T4).